Consider the following 496-residue polypeptide: Cytochrome P450 71D178 (496 aa).

A helical; Signal-anchor for type II membrane protein transmembrane segment spans residues 1 to 21 (MDISISWVVIILLVLSYLILM). Heme is bound at residue C435.

This sequence belongs to the cytochrome P450 family. The cofactor is heme. As to expression, expressed in flowers, leaves and stems, especially in glandular trichomes.

It is found in the membrane. The catalysed reaction is (4S)-limonene + reduced [NADPH--hemoprotein reductase] + O2 = (1S,5R)-carveol + oxidized [NADPH--hemoprotein reductase] + H2O + H(+). It catalyses the reaction gamma-terpinene + 2 reduced [NADPH--hemoprotein reductase] + 2 O2 = carvacrol + 2 oxidized [NADPH--hemoprotein reductase] + 3 H2O + 2 H(+). The enzyme catalyses gamma-terpinene + 2 reduced [NADPH--hemoprotein reductase] + 2 O2 = thymol + 2 oxidized [NADPH--hemoprotein reductase] + 3 H2O + 2 H(+). It carries out the reaction (4R)-limonene + reduced [NADPH--hemoprotein reductase] + O2 = (1R,6S)-isopiperitenol + oxidized [NADPH--hemoprotein reductase] + H2O + H(+). It functions in the pathway secondary metabolite biosynthesis; terpenoid biosynthesis. Its function is as follows. Involved in the biosynthesis of phenolic monoterpenes natural products thymol and carvacrol which have a broad range of biological activities acting as antimicrobial compounds, insecticides, antioxidants and pharmaceutical agents. Catalyzes the C2- and C3-hydroxylation of gamma-terpinene to produce carvacrol and thymol, respectively. Also mediates the C6-hydroxylation of (4S)-limonene to form carveol and the C3-hydroxylation of (4R)-limonene to generate (+)-trans-isopiperitenol. This chain is Cytochrome P450 71D178, found in Origanum vulgare (Wild marjoram).